A 297-amino-acid polypeptide reads, in one-letter code: MSLKSYSTPTYWQRVKVACQYLFPQLPITRLAGWLAEQKWGMVTHFIIRIFAKQYNVNLAEAEKTNPADYTTFNEFFLRPLKENARPINQDDQAVCLPADGKISELGQINENRLLQAKGHYFTLETLLANDEEMAESFKNGSFITTYLSPRDYHRVHMPCDATLKKMIYVPGDLFSVNSFLAEHIPNLFARNERVICEFETAFGPMVQILVGATITASISTVWAGIINPPRSKDVVEYNYQTTGETAIHLKKGDEMGAFRLGSTVINLFPQATVELVSHLQAGVETRMGERFAKIIK.

Catalysis depends on charge relay system; for autoendoproteolytic cleavage activity residues aspartate 100, histidine 157, and serine 263. Serine 263 (schiff-base intermediate with substrate; via pyruvic acid; for decarboxylase activity) is an active-site residue. Serine 263 carries the post-translational modification Pyruvic acid (Ser); by autocatalysis.

The protein belongs to the phosphatidylserine decarboxylase family. PSD-B subfamily. Prokaryotic type I sub-subfamily. In terms of assembly, heterodimer of a large membrane-associated beta subunit and a small pyruvoyl-containing alpha subunit. Pyruvate serves as cofactor. In terms of processing, is synthesized initially as an inactive proenzyme. Formation of the active enzyme involves a self-maturation process in which the active site pyruvoyl group is generated from an internal serine residue via an autocatalytic post-translational modification. Two non-identical subunits are generated from the proenzyme in this reaction, and the pyruvate is formed at the N-terminus of the alpha chain, which is derived from the carboxyl end of the proenzyme. The autoendoproteolytic cleavage occurs by a canonical serine protease mechanism, in which the side chain hydroxyl group of the serine supplies its oxygen atom to form the C-terminus of the beta chain, while the remainder of the serine residue undergoes an oxidative deamination to produce ammonia and the pyruvoyl prosthetic group on the alpha chain. During this reaction, the Ser that is part of the protease active site of the proenzyme becomes the pyruvoyl prosthetic group, which constitutes an essential element of the active site of the mature decarboxylase.

The protein resides in the cell membrane. The enzyme catalyses a 1,2-diacyl-sn-glycero-3-phospho-L-serine + H(+) = a 1,2-diacyl-sn-glycero-3-phosphoethanolamine + CO2. It functions in the pathway phospholipid metabolism; phosphatidylethanolamine biosynthesis; phosphatidylethanolamine from CDP-diacylglycerol: step 2/2. Functionally, catalyzes the formation of phosphatidylethanolamine (PtdEtn) from phosphatidylserine (PtdSer). In Haemophilus ducreyi (strain 35000HP / ATCC 700724), this protein is Phosphatidylserine decarboxylase proenzyme.